A 242-amino-acid polypeptide reads, in one-letter code: Uridylate kinase (242 aa).

13–16 (KLSG) lines the ATP pocket. Residue G55 participates in UMP binding. 2 residues coordinate ATP: G56 and R60. UMP-binding positions include D75 and 136–143 (TGNPFFTT). Positions 163, 169, and 172 each coordinate ATP.

Belongs to the UMP kinase family. Homohexamer.

The protein resides in the cytoplasm. The enzyme catalyses UMP + ATP = UDP + ADP. The protein operates within pyrimidine metabolism; CTP biosynthesis via de novo pathway; UDP from UMP (UMPK route): step 1/1. Its activity is regulated as follows. Inhibited by UTP. Functionally, catalyzes the reversible phosphorylation of UMP to UDP. This chain is Uridylate kinase, found in Zymomonas mobilis subsp. mobilis (strain ATCC 31821 / ZM4 / CP4).